The sequence spans 731 residues: Lanosterol synthase ERG7 (731 aa).

T2 is subject to N-acetylthreonine. The PFTB 1 repeat unit spans residues 125-167 (RIELIRYIVNTAHPVDGGWGLHSVDKSTVFGTVLNYVILRLLG). Catalysis depends on D456, which acts as the Proton donor. The PFTB 2 repeat unit spans residues 615–661 (VRKGCDFLVSKQMKDGGWGESMKSSELHSYVDSEKSLVVQTAWALIA).

The protein belongs to the terpene cyclase/mutase family.

It localises to the lipid droplet. The protein resides in the endoplasmic reticulum membrane. The enzyme catalyses (S)-2,3-epoxysqualene = lanosterol. It participates in terpene metabolism; lanosterol biosynthesis; lanosterol from farnesyl diphosphate: step 3/3. Catalytic activity requires the presence of ERG27. Functionally, lanosterol synthase; part of the third module of ergosterol biosynthesis pathway that includes the late steps of the pathway. ERG7 catalyzes the cyclization of (S)-2,3 oxidosqualene to lanosterol, a reaction that forms the sterol core. The third module or late pathway involves the ergosterol synthesis itself through consecutive reactions that mainly occur in the endoplasmic reticulum (ER) membrane. Firstly, the squalene synthase ERG9 catalyzes the condensation of 2 farnesyl pyrophosphate moieties to form squalene, which is the precursor of all steroids. Squalene synthase is crucial for balancing the incorporation of farnesyl diphosphate (FPP) into sterol and nonsterol isoprene synthesis. Secondly, the squalene epoxidase ERG1 catalyzes the stereospecific oxidation of squalene to (S)-2,3-epoxysqualene, which is considered to be a rate-limiting enzyme in steroid biosynthesis. Then, the lanosterol synthase ERG7 catalyzes the cyclization of (S)-2,3 oxidosqualene to lanosterol, a reaction that forms the sterol core. In the next steps, lanosterol is transformed to zymosterol through a complex process involving various demethylation, reduction and desaturation reactions. The lanosterol 14-alpha-demethylase ERG11 (also known as CYP51) catalyzes C14-demethylation of lanosterol to produce 4,4'-dimethyl cholesta-8,14,24-triene-3-beta-ol, which is critical for ergosterol biosynthesis. The C-14 reductase ERG24 reduces the C14=C15 double bond of 4,4-dimethyl-cholesta-8,14,24-trienol to produce 4,4-dimethyl-cholesta-8,24-dienol. 4,4-dimethyl-cholesta-8,24-dienol is substrate of the C-4 demethylation complex ERG25-ERG26-ERG27 in which ERG25 catalyzes the three-step monooxygenation required for the demethylation of 4,4-dimethyl and 4alpha-methylsterols, ERG26 catalyzes the oxidative decarboxylation that results in a reduction of the 3-beta-hydroxy group at the C-3 carbon to an oxo group, and ERG27 is responsible for the reduction of the keto group on the C-3. ERG28 has a role as a scaffold to help anchor ERG25, ERG26 and ERG27 to the endoplasmic reticulum and ERG29 regulates the activity of the iron-containing C4-methylsterol oxidase ERG25. Then, the sterol 24-C-methyltransferase ERG6 catalyzes the methyl transfer from S-adenosyl-methionine to the C-24 of zymosterol to form fecosterol. The C-8 sterol isomerase ERG2 catalyzes the reaction which results in unsaturation at C-7 in the B ring of sterols and thus converts fecosterol to episterol. The sterol-C5-desaturase ERG3 then catalyzes the introduction of a C-5 double bond in the B ring to produce 5-dehydroepisterol. The C-22 sterol desaturase ERG5 further converts 5-dehydroepisterol into ergosta-5,7,22,24(28)-tetraen-3beta-ol by forming the C-22(23) double bond in the sterol side chain. Finally, ergosta-5,7,22,24(28)-tetraen-3beta-ol is substrate of the C-24(28) sterol reductase ERG4 to produce ergosterol. The protein is Lanosterol synthase ERG7 of Saccharomyces cerevisiae (strain ATCC 204508 / S288c) (Baker's yeast).